A 281-amino-acid chain; its full sequence is uncharacterized protein (281 aa).

Transmembrane regions (helical) follow at residues 23 to 45 (LLLS…FFAA), 65 to 87 (IANF…ASLG), and 94 to 116 (TSVI…GSLS).

Belongs to the MscS (TC 1.A.23) family.

It localises to the cell membrane. This is an uncharacterized protein from Buchnera aphidicola subsp. Baizongia pistaciae (strain Bp).